Here is a 226-residue protein sequence, read N- to C-terminus: Isoprenyl transferase (226 aa).

The active site involves D12. A Mg(2+)-binding site is contributed by D12. Substrate-binding positions include 13–16, W17, K25, H29, and 57–59; these read GNAR and SSE. The Proton acceptor role is filled by N60. Residues W61, R63, R174, and 180–182 each bind substrate; that span reads RIS. A Mg(2+)-binding site is contributed by E193.

This sequence belongs to the UPP synthase family. Homodimer. Requires Mg(2+) as cofactor.

Its function is as follows. Catalyzes the condensation of isopentenyl diphosphate (IPP) with allylic pyrophosphates generating different type of terpenoids. The chain is Isoprenyl transferase from Rickettsia bellii (strain RML369-C).